We begin with the raw amino-acid sequence, 121 residues long: Small ribosomal subunit protein uS13 (121 aa).

The disordered stretch occupies residues 91–121 (HRRGLPVRGQKTKNNARTRKGPVKTVANKKK).

Belongs to the universal ribosomal protein uS13 family. In terms of assembly, part of the 30S ribosomal subunit. Forms a loose heterodimer with protein S19. Forms two bridges to the 50S subunit in the 70S ribosome.

Its function is as follows. Located at the top of the head of the 30S subunit, it contacts several helices of the 16S rRNA. In the 70S ribosome it contacts the 23S rRNA (bridge B1a) and protein L5 of the 50S subunit (bridge B1b), connecting the 2 subunits; these bridges are implicated in subunit movement. Contacts the tRNAs in the A and P-sites. The sequence is that of Small ribosomal subunit protein uS13 from Staphylococcus epidermidis (strain ATCC 35984 / DSM 28319 / BCRC 17069 / CCUG 31568 / BM 3577 / RP62A).